A 223-amino-acid chain; its full sequence is MSLYATQDEKKQAAAKAALKHLPKGGILGVGTGSTVNFLIDLLPELQLEAAVASSQATADRLKKLGIEVVDMNHVGSLDAYVDGADEIDRHMHMIKGGGAALTREKIVASIAKKFVCIVDDSKWVDQLGRDFPLPVEVIPMARSAVARKLVSLGGDPVYREGVVTDNGNIILDVFNLNILNAIDLEKTINNIPGVVTNGIFALNPATIAIVATNDGIEERTAQ.

Residues 32–35, 83–86, and 96–99 each bind substrate; these read TGST, DGAD, and KGGG. Glu105 functions as the Proton acceptor in the catalytic mechanism. Lys123 lines the substrate pocket.

Belongs to the ribose 5-phosphate isomerase family. Homodimer.

It carries out the reaction aldehydo-D-ribose 5-phosphate = D-ribulose 5-phosphate. It participates in carbohydrate degradation; pentose phosphate pathway; D-ribose 5-phosphate from D-ribulose 5-phosphate (non-oxidative stage): step 1/1. In terms of biological role, catalyzes the reversible conversion of ribose-5-phosphate to ribulose 5-phosphate. The protein is Ribose-5-phosphate isomerase A of Acinetobacter baumannii (strain ATCC 17978 / DSM 105126 / CIP 53.77 / LMG 1025 / NCDC KC755 / 5377).